The following is a 129-amino-acid chain: Small ribosomal subunit protein uS9 (129 aa).

The tract at residues 108–129 (RMVERKKYGKKKARKSFQFSKR) is disordered. Residues 114 to 129 (KYGKKKARKSFQFSKR) show a composition bias toward basic residues.

Belongs to the universal ribosomal protein uS9 family.

The chain is Small ribosomal subunit protein uS9 from Chlorobaculum tepidum (strain ATCC 49652 / DSM 12025 / NBRC 103806 / TLS) (Chlorobium tepidum).